Consider the following 194-residue polypeptide: [Ribosomal protein uS5]-alanine N-acetyltransferase (194 aa).

One can recognise an N-acetyltransferase domain in the interval 18–188 (LVVRLVHDRD…DHVLTALTTP (171 aa)).

It belongs to the acetyltransferase family. RimJ subfamily.

Its subcellular location is the cytoplasm. It carries out the reaction N-terminal L-alanyl-[ribosomal protein uS5] + acetyl-CoA = N-terminal N(alpha)-acetyl-L-alanyl-[ribosomal protein uS5] + CoA + H(+). Its function is as follows. Acetylates the N-terminal alanine of ribosomal protein uS5. The polypeptide is [Ribosomal protein uS5]-alanine N-acetyltransferase (rimJ) (Shigella flexneri).